The sequence spans 343 residues: MRN complex-interacting protein (343 aa).

The interval 75 to 104 is disordered; that stretch reads EETVSASEEENVGHQQAGNVKQQEKSQPSE. Positions 87–104 are enriched in polar residues; that stretch reads GHQQAGNVKQQEKSQPSE. 2 positions are modified to phosphoserine: Ser-100 and Ser-115. 3 disordered regions span residues 128–178, 193–212, and 230–324; these read SKQP…WGPQ, SPCLQENSADCSAGELRGPG, and AQFV…AQNP. Residues 148–151 carry the Nuclear localization signal (NLS) motif; it reads RKRK. A compositionally biased stretch (polar residues) spans 193–202; it reads SPCLQENSAD. The segment at 213 to 237 is necessary for the association with the MRN complex; the sequence is KELWSPIQQVTATSSKWAQFVLPPR. Over residues 240-255 the composition is skewed to basic and acidic residues; it reads SHVDSEQPRSLQRDPR.

Belongs to the MRNIP family. Associates with the MRE11-RAD50-NBN (MRN) damage-sensing complex; this association is constitutive. Interacts with MRE11. Interacts with NBN. Interacts with RAD50. Phosphorylated; phosphorylation is constitutive and occurs in the absence of any DNA-damaging stimulus. Phosphorylation on Ser-115 is necessary for its nuclear retention.

It is found in the nucleus. Its subcellular location is the nucleoplasm. In terms of biological role, plays a role in the cellular response to DNA damage and the maintenance of genome stability through its association with the MRN damage-sensing complex. Promotes chromatin loading and activity of the MRN complex to facilitate subsequent ATM-mediated DNA damage response signaling and DNA repair. The polypeptide is MRN complex-interacting protein (Homo sapiens (Human)).